The sequence spans 479 residues: Auxin transporter-like protein 1 (479 aa).

The Cytoplasmic segment spans residues 1–58 (MLSEKQGEETMMSSLNETIELNEEREEEKGASPGSGFKNFLWHGGSVYDAWFSCASNQ). A helical membrane pass occupies residues 59 to 76 (VAQVLLTLPYSFSQLGMI). The Extracellular segment spans residues 77-78 (SG). The helical transmembrane segment at 79 to 99 (IIFQVFYGLMGSWTAYLISIL) threads the bilayer. The Cytoplasmic portion of the chain corresponds to 100 to 134 (YVEYRSRKEKENVSFKNHVIQWFEVLEGLLGPYWK). Residues 135-155 (AIGLAFNCTFLLFGSVIQLIA) traverse the membrane as a helical segment. The Extracellular portion of the chain corresponds to 156 to 171 (CASNIYYINDHLDKRT). Residues 172-192 (WTYIFGACCATTVFIPSFHNY) form a helical membrane-spanning segment. Over 193–195 (RIW) the chain is Cytoplasmic. The helical transmembrane segment at 196 to 216 (SFLGLGMTTYTAWYMTIAAIV) threads the bilayer. Residues 217-231 (HGQVENVVHSGPKKM) lie on the Extracellular side of the membrane. A helical membrane pass occupies residues 232 to 252 (VWYFTGATNILYTFGGHAVTV). Residues 253-265 (EIMHAMWKPQKFK) are Cytoplasmic-facing. A helical membrane pass occupies residues 266–286 (AIYFFATLYVFTLTLPSAIAV). At 287–313 (YWAFGDQLLDHSNAFSLLPRNAWRDAG) the chain is on the extracellular side. Residues 314–334 (VILMLIHQFITFGFACTPLYF) form a helical membrane-spanning segment. Residues 335 to 355 (VWEKVIGMHDTKSIFLRALAR) are Cytoplasmic-facing. A helical membrane pass occupies residues 356–376 (LPVVIPIWFLAIIFPFFGPIN). Serine 377 is a topological domain (extracellular). The chain crosses the membrane as a helical span at residues 378 to 398 (AVGALLVSFTVYVIPASAHML). Residues 399–421 (TYRSASARQNAAEKLPKVIPSWT) are Cytoplasmic-facing. A helical membrane pass occupies residues 422–442 (LMYVINAFVVIWVTIVGFGFG). Over 443 to 479 (GWASMTNFIKQVDTFGLFAKCYQCPPKLPASNHTMHH) the chain is Extracellular. N-linked (GlcNAc...) asparagine glycosylation occurs at asparagine 474.

This sequence belongs to the amino acid/polyamine transporter 2 family. Amino acid/auxin permease (AAAP) (TC 2.A.18.1) subfamily. In terms of tissue distribution, shoots and roots of nodulating plants. Higher levels in roots, flowers and stems, lower in nodules, leaves, petioles and shoot apices.

The protein resides in the cell membrane. In terms of biological role, carrier protein involved in proton-driven auxin influx. Mediates the formation of auxin gradient from developing leaves (site of auxin biosynthesis) to tips by contributing to the loading of auxin in vascular tissues and facilitating acropetal (base to tip) auxin transport within inner tissues of the root apex, and basipetal (tip to base) auxin transport within outer tissues of the root apex. May be involved in lateral roots and nodules formation. The polypeptide is Auxin transporter-like protein 1 (LAX1) (Medicago truncatula (Barrel medic)).